The following is a 201-amino-acid chain: Recombination protein RecR (201 aa).

A C4-type zinc finger spans residues 57–72 (CADCRTFTEQEVCNIC). Residues 81–176 (GQICVVESPA…EASRIAHGVP (96 aa)) form the Toprim domain.

It belongs to the RecR family.

Functionally, may play a role in DNA repair. It seems to be involved in an RecBC-independent recombinational process of DNA repair. It may act with RecF and RecO. In Shigella boydii serotype 4 (strain Sb227), this protein is Recombination protein RecR.